A 389-amino-acid polypeptide reads, in one-letter code: P2X purinoceptor 6 (389 aa).

The Cytoplasmic portion of the chain corresponds to 1–45 (MQLQPAGTGNMASAAAAALVSWGFLDYKTEKYVLTRNCRVGVSQR). The helical transmembrane segment at 46–66 (LLQLAVVVYVIGWALLAKKGY) threads the bilayer. Residues 67-335 (QERDLAPQTS…LVTGQAGKFA (269 aa)) are Extracellular-facing. Intrachain disulfides connect cysteine 129–cysteine 179, cysteine 140–cysteine 163, and cysteine 146–cysteine 173. N-linked (GlcNAc...) asparagine glycosylation is found at asparagine 167, asparagine 197, and asparagine 212. 2 disulfides stabilise this stretch: cysteine 230-cysteine 240 and cysteine 274-cysteine 283. The helical transmembrane segment at 336–356 (LIPTAITVGTGAAWLGMVTFL) threads the bilayer. Residues 357 to 389 (CDLLLLYVDREAGFYWRTKYEEARAPKTTTNSS) lie on the Cytoplasmic side of the membrane.

The protein belongs to the P2X receptor family. Unlike most P2RXs, P2RX6 does not seem to form homotrimers. P2RX6 are likely to form as obligate heteromers with other P2RXs subunits. Forms heterotrimer with P2RX2 with a variable subunit stoichiometry determined by subunit expression levels. Forms heterotrimer with P2RX4; functional differences between homomeric P2RX4 and P2RX4/6 heterotrimer are minor. Forms a P2RX2/P2RX4/P2RX6 heterotrimer. Interacts with SF3A1; resulting in a reduction of the splicing activity. Post-translationally, N-glycosylated. N-linked glycosylation can affect trafficking to the membrane and function. Predominantly expressed in skeletal muscle. Also expressed in lung.

It localises to the cell membrane. Its subcellular location is the endoplasmic reticulum. The protein localises to the nucleus. It is found in the nucleus inner membrane. The catalysed reaction is Ca(2+)(in) = Ca(2+)(out). In terms of biological role, acts as a modulatory subunit rather than a functional channel. Unlike other P2XRs members, P2RX6 does not seem to form functional homotrimers. P2RX6 requires the presence of P2RX4 or P2RX2 to form functional heterotrimeric receptors at the plasma membrane. P2RX6 can be translocated to the nucleus, where it interacts with the splicing factor (SF3A1), to reduce the incidence of mRNA splicing. May function as a nuclear regulator of post-transcriptional modifications in neurons. In Mus musculus (Mouse), this protein is P2X purinoceptor 6 (P2rx6).